We begin with the raw amino-acid sequence, 338 residues long: Holliday junction branch migration complex subunit RuvB (338 aa).

The interval 1–181 (MEERILTQNF…FGVINRLDYY (181 aa)) is large ATPase domain (RuvB-L). Residues leucine 20, arginine 21, glycine 62, lysine 65, threonine 66, threonine 67, 128-130 (EDF), arginine 171, tyrosine 181, and arginine 218 contribute to the ATP site. A Mg(2+)-binding site is contributed by threonine 66. Residues 182–252 (SVEELKEIIK…TSKEALDVLG (71 aa)) are small ATPAse domain (RuvB-S). The head domain (RuvB-H) stretch occupies residues 255–338 (EIGLEYIDRK…YIEQGRIEGV (84 aa)). Arginine 310 and arginine 315 together coordinate DNA.

Belongs to the RuvB family. In terms of assembly, homohexamer. Forms an RuvA(8)-RuvB(12)-Holliday junction (HJ) complex. HJ DNA is sandwiched between 2 RuvA tetramers; dsDNA enters through RuvA and exits via RuvB. An RuvB hexamer assembles on each DNA strand where it exits the tetramer. Each RuvB hexamer is contacted by two RuvA subunits (via domain III) on 2 adjacent RuvB subunits; this complex drives branch migration. In the full resolvosome a probable DNA-RuvA(4)-RuvB(12)-RuvC(2) complex forms which resolves the HJ.

The protein localises to the cytoplasm. It catalyses the reaction ATP + H2O = ADP + phosphate + H(+). Its function is as follows. The RuvA-RuvB-RuvC complex processes Holliday junction (HJ) DNA during genetic recombination and DNA repair, while the RuvA-RuvB complex plays an important role in the rescue of blocked DNA replication forks via replication fork reversal (RFR). RuvA specifically binds to HJ cruciform DNA, conferring on it an open structure. The RuvB hexamer acts as an ATP-dependent pump, pulling dsDNA into and through the RuvAB complex. RuvB forms 2 homohexamers on either side of HJ DNA bound by 1 or 2 RuvA tetramers; 4 subunits per hexamer contact DNA at a time. Coordinated motions by a converter formed by DNA-disengaged RuvB subunits stimulates ATP hydrolysis and nucleotide exchange. Immobilization of the converter enables RuvB to convert the ATP-contained energy into a lever motion, pulling 2 nucleotides of DNA out of the RuvA tetramer per ATP hydrolyzed, thus driving DNA branch migration. The RuvB motors rotate together with the DNA substrate, which together with the progressing nucleotide cycle form the mechanistic basis for DNA recombination by continuous HJ branch migration. Branch migration allows RuvC to scan DNA until it finds its consensus sequence, where it cleaves and resolves cruciform DNA. This Thermoanaerobacter pseudethanolicus (strain ATCC 33223 / 39E) (Clostridium thermohydrosulfuricum) protein is Holliday junction branch migration complex subunit RuvB.